A 227-amino-acid chain; its full sequence is Cytidylate kinase (227 aa).

12–20 (GPSGSGKGT) serves as a coordination point for ATP.

The protein belongs to the cytidylate kinase family. Type 1 subfamily.

It localises to the cytoplasm. It catalyses the reaction CMP + ATP = CDP + ADP. The catalysed reaction is dCMP + ATP = dCDP + ADP. This Nitrosococcus oceani (strain ATCC 19707 / BCRC 17464 / JCM 30415 / NCIMB 11848 / C-107) protein is Cytidylate kinase.